The primary structure comprises 182 residues: ATP synthase subunit delta (182 aa).

It belongs to the ATPase delta chain family. As to quaternary structure, F-type ATPases have 2 components, F(1) - the catalytic core - and F(0) - the membrane proton channel. F(1) has five subunits: alpha(3), beta(3), gamma(1), delta(1), epsilon(1). F(0) has three main subunits: a(1), b(2) and c(10-14). The alpha and beta chains form an alternating ring which encloses part of the gamma chain. F(1) is attached to F(0) by a central stalk formed by the gamma and epsilon chains, while a peripheral stalk is formed by the delta and b chains.

The protein localises to the cell inner membrane. In terms of biological role, f(1)F(0) ATP synthase produces ATP from ADP in the presence of a proton or sodium gradient. F-type ATPases consist of two structural domains, F(1) containing the extramembraneous catalytic core and F(0) containing the membrane proton channel, linked together by a central stalk and a peripheral stalk. During catalysis, ATP synthesis in the catalytic domain of F(1) is coupled via a rotary mechanism of the central stalk subunits to proton translocation. Functionally, this protein is part of the stalk that links CF(0) to CF(1). It either transmits conformational changes from CF(0) to CF(1) or is implicated in proton conduction. This Cytophaga hutchinsonii (strain ATCC 33406 / DSM 1761 / CIP 103989 / NBRC 15051 / NCIMB 9469 / D465) protein is ATP synthase subunit delta.